A 138-amino-acid chain; its full sequence is Fluoride-specific ion channel FluC (138 aa).

Helical transmembrane passes span 34 to 54 (FMPK…GACA), 60 to 80 (MQFG…SFLM), 88 to 108 (FWGT…VVLV), and 112 to 132 (LPHA…AWLM). Na(+) contacts are provided by G95 and T98.

It belongs to the fluoride channel Fluc/FEX (TC 1.A.43) family.

It is found in the cell membrane. It carries out the reaction fluoride(in) = fluoride(out). Its activity is regulated as follows. Na(+) is not transported, but it plays an essential structural role and its presence is essential for fluoride channel function. Fluoride-specific ion channel. Important for reducing fluoride concentration in the cell, thus reducing its toxicity. The chain is Fluoride-specific ion channel FluC from Corynebacterium efficiens (strain DSM 44549 / YS-314 / AJ 12310 / JCM 11189 / NBRC 100395).